We begin with the raw amino-acid sequence, 259 residues long: Phosphonates import ATP-binding protein PhnC (259 aa).

The 242-residue stretch at 4–245 (ISIQSVTKRF…ALRTIYQREG (242 aa)) folds into the ABC transporter domain. An ATP-binding site is contributed by 37-44 (GPSGAGKS).

The protein belongs to the ABC transporter superfamily. Phosphonates importer (TC 3.A.1.9.1) family. In terms of assembly, the complex is composed of two ATP-binding proteins (PhnC), two transmembrane proteins (PhnE) and a solute-binding protein (PhnD).

It is found in the cell inner membrane. It carries out the reaction phosphonate(out) + ATP + H2O = phosphonate(in) + ADP + phosphate + H(+). Part of the ABC transporter complex PhnCDE involved in phosphonates import. Responsible for energy coupling to the transport system. The sequence is that of Phosphonates import ATP-binding protein PhnC from Thiobacillus denitrificans (strain ATCC 25259 / T1).